Here is a 247-residue protein sequence, read N- to C-terminus: UPF0246 protein LSEI_2080 (247 aa).

It belongs to the UPF0246 family.

This Lacticaseibacillus paracasei (strain ATCC 334 / BCRC 17002 / CCUG 31169 / CIP 107868 / KCTC 3260 / NRRL B-441) (Lactobacillus paracasei) protein is UPF0246 protein LSEI_2080.